Consider the following 296-residue polypeptide: 4-hydroxy-tetrahydrodipicolinate synthase (296 aa).

Thr49 lines the pyruvate pocket. The Proton donor/acceptor role is filled by Tyr137. Lys166 (schiff-base intermediate with substrate) is an active-site residue. Ile208 lines the pyruvate pocket.

It belongs to the DapA family. In terms of assembly, homotetramer; dimer of dimers.

The protein resides in the cytoplasm. The enzyme catalyses L-aspartate 4-semialdehyde + pyruvate = (2S,4S)-4-hydroxy-2,3,4,5-tetrahydrodipicolinate + H2O + H(+). The protein operates within amino-acid biosynthesis; L-lysine biosynthesis via DAP pathway; (S)-tetrahydrodipicolinate from L-aspartate: step 3/4. Catalyzes the condensation of (S)-aspartate-beta-semialdehyde [(S)-ASA] and pyruvate to 4-hydroxy-tetrahydrodipicolinate (HTPA). The chain is 4-hydroxy-tetrahydrodipicolinate synthase from Pelodictyon phaeoclathratiforme (strain DSM 5477 / BU-1).